A 79-amino-acid polypeptide reads, in one-letter code: MAQPDSSSLAEVLDRVLDKGVVVDVWARISLVGIEILTVEARVVAASVDTFLHYAEEIAKIEQAELTAGAEAPEPAPEA.

An alpha helix 1 region spans residues 9-19 (LAEVLDRVLDK). Residues 23 to 31 (VDVWARISL) are beta-strand 1. A beta turn region spans residues 32–34 (VGI). Residues 35–43 (EILTVEARV) are beta-strand 2. The segment at 48–67 (VDTFLHYAEEIAKIEQAELT) is alpha helix 2.

Belongs to the gas vesicle GvpA family. The gas vesicle shell is 2 nm thick and consists of a single layer of this protein. It forms helical ribs nearly perpendicular to the long axis of the vesicle.

It localises to the gas vesicle shell. Its function is as follows. Gas vesicles are hollow, gas filled proteinaceous nanostructures found in several microbial planktonic microorganisms. They allow positioning of halobacteria at the optimal depth for growth in the poorly aerated shallow brine pools of their habitat. GvpA forms the gas vesicle shell. This protein can replace the p-gvpA gene in the p-vac locus and increases the critical collapse pressure (CCP) of hybrid gas vesicles from 0.66 MPa to 0.90 MPa. In stationary phase gas vesicles about 30 times more GvpA1 is found than GvpA2. In terms of biological role, expression of 2 c-vac DNA fragments containing 2 divergently transcribed regions (gvpE-gvpF-gvpG-gvpH-gvpI-gvpJ-gvpK-gvpL-gvpM and gvpA-gvpC-gvpN-gvpO) allows H.volcanii to produce gas vesicles. All site-directed mutagenesis is tested in H.volcanii. This is Gas vesicle protein A2 from Halobacterium salinarum (strain ATCC 700922 / JCM 11081 / NRC-1) (Halobacterium halobium).